The sequence spans 408 residues: Menaquinone reductase (408 aa).

FAD contacts are provided by residues 13–17 (GAGPA), 46–49 (CGDG), arginine 103, alanine 127, aspartate 290, and 302–303 (GI).

Belongs to the geranylgeranyl reductase family. FAD is required as a cofactor.

The enzyme catalyses menaquinone-9 + AH2 = beta-dihydromenaquinone-9 + A. Its pathway is quinol/quinone metabolism; menaquinone biosynthesis. In terms of biological role, catalyzes the reduction of a single double bond in the isoprenoid tail of menaquinone (MK-9) in M.tuberculosis, likely the beta-isoprene unit, forming the predominant form of menaquinone found in mycobacteria, MK-9(II-H2). This chain is Menaquinone reductase, found in Mycobacterium tuberculosis (strain CDC 1551 / Oshkosh).